The following is a 190-amino-acid chain: dCTP deaminase, dUMP-forming (190 aa).

Residues 101-106 (KSSLGR), D119, 127-129 (TLE), Q148, Y162, and Q174 each bind dCTP. Catalysis depends on E129, which acts as the Proton donor/acceptor. The segment at 162–184 (YGSAKVGSKYQGQRGPTPSRSYQ) is disordered. Positions 171 to 184 (YQGQRGPTPSRSYQ) are enriched in polar residues.

The protein belongs to the dCTP deaminase family. As to quaternary structure, homotrimer.

It carries out the reaction dCTP + 2 H2O = dUMP + NH4(+) + diphosphate. It participates in pyrimidine metabolism; dUMP biosynthesis; dUMP from dCTP: step 1/1. Its function is as follows. Bifunctional enzyme that catalyzes both the deamination of dCTP to dUTP and the hydrolysis of dUTP to dUMP without releasing the toxic dUTP intermediate. In Mycobacterium sp. (strain JLS), this protein is dCTP deaminase, dUMP-forming.